The sequence spans 782 residues: Coiled-coil alpha-helical rod protein 1 (782 aa).

Composition is skewed to basic and acidic residues over residues 62-74 (ERDVSSDRQEPGR) and 208-218 (ETRRAGEAKEL). Disordered stretches follow at residues 62–82 (ERDVSSDRQEPGRRGRSWGLE) and 182–218 (LTQAHEEALSSLTSKAEGLEKSLSSLETRRAGEAKEL). 3 coiled-coil regions span residues 82 to 314 (EGSQ…ELTR), 344 to 437 (LMVQ…NAVS), and 498 to 691 (VADV…QQEG).

Its subcellular location is the cytoplasm. The protein resides in the nucleus. In terms of biological role, may be a regulator of keratinocyte proliferation or differentiation. This is Coiled-coil alpha-helical rod protein 1 (CCHCR1) from Pan paniscus (Pygmy chimpanzee).